Here is a 447-residue protein sequence, read N- to C-terminus: Multicopper oxidase mco (447 aa).

The span at 1 to 25 shows a compositional bias: basic and acidic residues; that stretch reads MMDMKENDQKRNDMMDMKSHDERKN. A disordered region spans residues 1-43; the sequence is MMDMKENDQKRNDMMDMKSHDERKNLNSSQGKNEITFPKVLDP. The Cu cation site is built by His-107, His-109, His-147, His-149, His-375, His-378, His-380, His-428, Cys-429, His-430, His-434, and Met-439.

It belongs to the multicopper oxidase family. Cu cation serves as cofactor.

Its subcellular location is the cytoplasm. Its function is as follows. May be involved in copper homeostasis and oxidative stress response. Oxidizes the substrate 3,3'-dimethoxybenzidine in vitro. Also possesses low levels of phenoloxidase and ferroxidase activities. In Staphylococcus aureus, this protein is Multicopper oxidase mco (mco).